A 273-amino-acid polypeptide reads, in one-letter code: 2,3,4,5-tetrahydropyridine-2,6-dicarboxylate N-succinyltransferase (273 aa).

Residues arginine 104 and aspartate 141 each contribute to the substrate site.

The protein belongs to the transferase hexapeptide repeat family. In terms of assembly, homotrimer.

The protein localises to the cytoplasm. The enzyme catalyses (S)-2,3,4,5-tetrahydrodipicolinate + succinyl-CoA + H2O = (S)-2-succinylamino-6-oxoheptanedioate + CoA. The protein operates within amino-acid biosynthesis; L-lysine biosynthesis via DAP pathway; LL-2,6-diaminopimelate from (S)-tetrahydrodipicolinate (succinylase route): step 1/3. This is 2,3,4,5-tetrahydropyridine-2,6-dicarboxylate N-succinyltransferase from Neisseria meningitidis serogroup A / serotype 4A (strain DSM 15465 / Z2491).